Reading from the N-terminus, the 58-residue chain is Small ribosomal subunit protein bS21 (58 aa).

This sequence belongs to the bacterial ribosomal protein bS21 family.

This is Small ribosomal subunit protein bS21 from Lacticaseibacillus paracasei (strain ATCC 334 / BCRC 17002 / CCUG 31169 / CIP 107868 / KCTC 3260 / NRRL B-441) (Lactobacillus paracasei).